A 113-amino-acid chain; its full sequence is MNVLLGGLVIFATFVTLCNGSCYLMPNKMVPGDSTKECTDLKGNKHPLNSRWKTENCDECDCLEKEISCCSLVAIPVGYDQDNCQKIFKQEDCKYIVVEKKDPNKTCEVTQWI.

Residues 1–20 (MNVLLGGLVIFATFVTLCNG) form the signal peptide. Disulfide bonds link Cys-22/Cys-70, Cys-38/Cys-62, Cys-57/Cys-93, Cys-60/Cys-69, and Cys-84/Cys-107.

The protein belongs to the beta-microseminoprotein family.

Its subcellular location is the secreted. In Saguinus oedipus (Cotton-top tamarin), this protein is Beta-microseminoprotein A1 (MSPA).